The primary structure comprises 402 residues: Leucine aminopeptidase 1 (402 aa).

The first 18 residues, 1–18 (MKISNASLLALLLPAASA), serve as a signal peptide directing secretion. Residues 19-92 (RFVEQAEQNR…GTFNKRPYKK (74 aa)) constitute a propeptide that is removed on maturation. 2 N-linked (GlcNAc...) asparagine glycosylation sites follow: Asn-111 and Asn-184. Zn(2+) contacts are provided by His-192, Asp-211, Glu-250, and Asp-277. Asn-304 carries N-linked (GlcNAc...) asparagine glycosylation. Cys-326 and Cys-330 are oxidised to a cystine. His-359 is a binding site for Zn(2+).

It belongs to the peptidase M28 family. M28E subfamily. As to quaternary structure, monomer. The cofactor is Zn(2+).

Its subcellular location is the secreted. Extracellular aminopeptidase that allows assimilation of proteinaceous substrates. In Neurospora crassa (strain ATCC 24698 / 74-OR23-1A / CBS 708.71 / DSM 1257 / FGSC 987), this protein is Leucine aminopeptidase 1 (lap1).